The sequence spans 84 residues: RNA-binding protein Hfq (84 aa).

Residues 9–69 (DRFLNILRTN…VSTIMPESFV (61 aa)) form the Sm domain.

Belongs to the Hfq family. Homohexamer.

RNA chaperone that binds small regulatory RNA (sRNAs) and mRNAs to facilitate mRNA translational regulation in response to envelope stress, environmental stress and changes in metabolite concentrations. Also binds with high specificity to tRNAs. The chain is RNA-binding protein Hfq from Thermosipho africanus (strain TCF52B).